Reading from the N-terminus, the 331-residue chain is 2-isopropylmalate synthase (331 aa).

A Pyruvate carboxyltransferase domain is found at 1–80; that stretch reads RDEVVRGRDV…YTRINTREIY (80 aa). Positions 15, 17, and 51 each coordinate Mn(2+). A regulatory domain region spans residues 205–331; the sequence is QLEHVQFFSG…PSIEEVHRGV (127 aa).

Belongs to the alpha-IPM synthase/homocitrate synthase family. LeuA type 1 subfamily. In terms of assembly, homotetramer. The cofactor is Mn(2+).

Its subcellular location is the cytoplasm. The enzyme catalyses 3-methyl-2-oxobutanoate + acetyl-CoA + H2O = (2S)-2-isopropylmalate + CoA + H(+). The protein operates within amino-acid biosynthesis; L-leucine biosynthesis; L-leucine from 3-methyl-2-oxobutanoate: step 1/4. In terms of biological role, catalyzes the condensation of the acetyl group of acetyl-CoA with 3-methyl-2-oxobutanoate (2-oxoisovalerate) to form 3-carboxy-3-hydroxy-4-methylpentanoate (2-isopropylmalate). The polypeptide is 2-isopropylmalate synthase (Thermus thermophilus).